We begin with the raw amino-acid sequence, 421 residues long: E3 ubiquitin-protein ligase MARCHF4 (421 aa).

The first 16 residues, 1 to 16 (MLLAIGVIVWCWGLLS), serve as a signal peptide directing secretion. The interval 60-79 (ELNAEGNATSSATESHSLAN) is disordered. The segment covering 65 to 77 (GNATSSATESHSL) has biased composition (polar residues). An RING-CH-type zinc finger spans residues 135-195 (DSGVRTPLCR…ELCYYKYQVI (61 aa)). Positions 143, 146, 159, 161, 169, 172, 185, and 188 each coordinate Zn(2+). 2 consecutive transmembrane segments (helical) span residues 218–238 (IAAAVLGSLFLIASISWLVWS) and 252–272 (LFQICYAMYGFMDLVCIALIV). 2 disordered regions span residues 319–385 (PLTH…LPDH) and 401–421 (QEPRGQTSNSNRELVMRVTTV). 2 stretches are compositionally biased toward polar residues: residues 367 to 380 (TEPQDSSEPSNGQP) and 403 to 412 (PRGQTSNSNR).

It is found in the golgi apparatus membrane. It carries out the reaction S-ubiquitinyl-[E2 ubiquitin-conjugating enzyme]-L-cysteine + [acceptor protein]-L-lysine = [E2 ubiquitin-conjugating enzyme]-L-cysteine + N(6)-ubiquitinyl-[acceptor protein]-L-lysine.. It functions in the pathway protein modification; protein ubiquitination. Functionally, E3 ubiquitin-protein ligase. E3 ubiquitin ligases accept ubiquitin from an E2 ubiquitin-conjugating enzyme in the form of a thioester and then directly transfer the ubiquitin to targeted substrates. In Danio rerio (Zebrafish), this protein is E3 ubiquitin-protein ligase MARCHF4 (marchf4).